We begin with the raw amino-acid sequence, 852 residues long: Patatin-like phospholipase domain-containing protein CaO19.1504 (852 aa).

Positions 41-52 are enriched in low complexity; it reads ATTDITTTPIND. The segment at 41–184 is disordered; sequence ATTDITTTPI…KKTTPTSSTS (144 aa). Residues 75–95 show a composition bias toward polar residues; the sequence is INGTVSDSSSITDEDIMNSSY. The segment covering 101 to 110 has biased composition (low complexity); sequence SSTNLKSNST. A compositionally biased stretch (acidic residues) spans 113-122; that stretch reads DDDDDDDDDD. 2 stretches are compositionally biased toward low complexity: residues 129 to 142 and 158 to 171; these read SGTT…SLSS and GGSR…KGSS. The helical transmembrane segment at 207-227 threads the bilayer; sequence WPILIFVFSWIGILGIFYFMI. One can recognise a PNPLA domain in the interval 396–588; it reads LCLSGGACFA…RTDIPIEALN (193 aa). The short motif at 427–431 is the GXSXG element; sequence GTSGG. Residue S429 is the Nucleophile of the active site. Residue D575 is the Proton acceptor of the active site. The segment at 800–840 is disordered; that stretch reads KKLLDELDNEDEEEDEEEEEVDVDDDDDDDDDSLSDSFEIT. Residues 805–833 show a composition bias toward acidic residues; the sequence is ELDNEDEEEDEEEEEVDVDDDDDDDDDSL.

Belongs to the PLPL family.

The protein resides in the membrane. In terms of biological role, probable lipid hydrolase. The sequence is that of Patatin-like phospholipase domain-containing protein CaO19.1504 from Candida albicans (strain SC5314 / ATCC MYA-2876) (Yeast).